A 445-amino-acid chain; its full sequence is GTPase Der (445 aa).

EngA-type G domains lie at 3-167 and 180-353; these read PVIA…YAGQ and IKIA…AAAM. GTP is bound by residues 9–16, 56–60, 119–122, 186–193, 233–237, and 298–301; these read GRPNVGKS, DTGGF, NKAE, DTAGL, and NKWD. A KH-like domain is found at 354–438; sequence AKLPTPKLTR…PLRIEFRSSN (85 aa).

It belongs to the TRAFAC class TrmE-Era-EngA-EngB-Septin-like GTPase superfamily. EngA (Der) GTPase family. Associates with the 50S ribosomal subunit.

Its function is as follows. GTPase that plays an essential role in the late steps of ribosome biogenesis. The chain is GTPase Der from Burkholderia cenocepacia (strain HI2424).